Here is a 109-residue protein sequence, read N- to C-terminus: Large ribosomal subunit protein uL22 (109 aa).

The protein belongs to the universal ribosomal protein uL22 family. Part of the 50S ribosomal subunit.

Its function is as follows. This protein binds specifically to 23S rRNA; its binding is stimulated by other ribosomal proteins, e.g. L4, L17, and L20. It is important during the early stages of 50S assembly. It makes multiple contacts with different domains of the 23S rRNA in the assembled 50S subunit and ribosome. In terms of biological role, the globular domain of the protein is located near the polypeptide exit tunnel on the outside of the subunit, while an extended beta-hairpin is found that lines the wall of the exit tunnel in the center of the 70S ribosome. This chain is Large ribosomal subunit protein uL22, found in Psychrobacter sp. (strain PRwf-1).